A 146-amino-acid polypeptide reads, in one-letter code: Villin-like protein ABP41 (146 aa).

The protein belongs to the villin/gelsolin family. As to quaternary structure, binds to actin. Expressed in pollen (at protein level).

The protein localises to the cytoplasm. It is found in the cytoskeleton. Functionally, ca(2+)-dependent actin filament-severing protein that is required for pollen tube growth. Probably regulates the dynamics of the actin cytoskeleton. It can promote the assembly of monomers into filaments (nucleation) as well as sever filaments already formed. The chain is Villin-like protein ABP41 from Lilium davidii (David's lily).